Reading from the N-terminus, the 549-residue chain is MQADFVIIGSGSAGSALAYRLSEDGKNSVLVIEAGGSDFGPFIQMPAALAWPMSMKRYNWGYLSEPEPNLNNRRITAPRGKVIGGSSSINGMVYVRGHAEDFNRWEELGASGWAYADVLPYFKRMEHSHGGEEGWRGTDGPLHVQRGGFTNPLFRAFIEAGKQAGFETTDDYNGSKQEGFGLMEQTIFSGRRWSAANAYLKPALKRKNVGMVYGLARKIVIEDGRATGVEIERGGKVEVVKATREVIVSASSFNSPKLLMLSGIGPGQHLNDMGIAVKADRPGVGANLQDHMEFYFQQVSTKPVSLYSWLPWFWQGVAGAQWLLSKGGLGASNQFEACAFLRSAPGLKQPDIQYHFLPVAISYDGKAAAKSHGFQVHVGYNLSKSRGSVTLRSPDPKAEPVLRFNYMSHPEDWEKFRHCVRLTREIFGQTAFDAYRGPEIQPGEGVQSDEQIDAFLREHLESAYHPCGTCKMGAKDDPMAVVDPQTRVIGVDGLRVADSSIFPHVTYGNLNGPSIMTGEKAADHILGKQPLARSNQEPWINPRAAVSDR.

Residue D4–E33 coordinates FAD. H465 acts as the Proton acceptor in catalysis.

This sequence belongs to the GMC oxidoreductase family. It depends on FAD as a cofactor.

It catalyses the reaction choline + A = betaine aldehyde + AH2. The enzyme catalyses betaine aldehyde + NAD(+) + H2O = glycine betaine + NADH + 2 H(+). It functions in the pathway amine and polyamine biosynthesis; betaine biosynthesis via choline pathway; betaine aldehyde from choline (cytochrome c reductase route): step 1/1. Functionally, involved in the biosynthesis of the osmoprotectant glycine betaine. Catalyzes the oxidation of choline to betaine aldehyde and betaine aldehyde to glycine betaine at the same rate. The protein is Oxygen-dependent choline dehydrogenase of Rhizobium etli (strain CIAT 652).